The chain runs to 210 residues: Large ribosomal subunit protein bL25 (210 aa).

It belongs to the bacterial ribosomal protein bL25 family. CTC subfamily. As to quaternary structure, part of the 50S ribosomal subunit; part of the 5S rRNA/L5/L18/L25 subcomplex. Contacts the 5S rRNA. Binds to the 5S rRNA independently of L5 and L18.

This is one of the proteins that binds to the 5S RNA in the ribosome where it forms part of the central protuberance. The protein is Large ribosomal subunit protein bL25 of Frankia casuarinae (strain DSM 45818 / CECT 9043 / HFP020203 / CcI3).